A 188-amino-acid polypeptide reads, in one-letter code: MATYYSNDFRSGLKIMLDGEPYAVESSEFVKPGKGQAFARVKLRRLLTGTRVEKTFKSTDSAEGADVVDMNLTYLYNDGEFWHFMNNETFEQLSADAKAIGDNAKWLLDQAECIVTLWNGQPISVTPPNFVELEIVDTDPGLKGDTAGTGGKPATLSTGAVVKVPLFVQIGEVIKVDTRSGEYVSRVK.

At lysine 34 the chain carries N6-(3,6-diaminohexanoyl)-5-hydroxylysine.

This sequence belongs to the elongation factor P family. Is beta-lysylated on the epsilon-amino group of Lys-34 by the combined action of EpmA and EpmB, and then hydroxylated on the C5 position of the same residue by EpmC. Lysylation is critical for the stimulatory effect of EF-P on peptide-bond formation. The lysylation moiety would extend toward the peptidyltransferase center and stabilize the terminal 3-CCA end of the tRNA. The hydroxylation of the C5 position on Lys-34 would allow additional potential stabilizing hydrogen-bond interactions with the P-tRNA.

It is found in the cytoplasm. It participates in protein biosynthesis; polypeptide chain elongation. In terms of biological role, involved in peptide bond synthesis. Alleviates ribosome stalling that occurs when 3 or more consecutive Pro residues or the sequence PPG is present in a protein, possibly by augmenting the peptidyl transferase activity of the ribosome. Modification of Lys-34 is required for alleviation. The polypeptide is Elongation factor P (Salmonella arizonae (strain ATCC BAA-731 / CDC346-86 / RSK2980)).